A 387-amino-acid polypeptide reads, in one-letter code: Hydroxycarboxylic acid receptor 3 (387 aa).

The Extracellular portion of the chain corresponds to 1 to 28 (MNRHHLQDHFLEIDKKNCCVFRDDFIAK). Residues 29–50 (VLPPVLGLEFIFGLLGNGLALW) traverse the membrane as a helical segment. Residues 51–63 (IFCFHLKSWKSSR) are Cytoplasmic-facing. Residues 64 to 85 (IFLFNLAVADFLLIICLPFVMD) form a helical membrane-spanning segment. The Extracellular portion of the chain corresponds to 86 to 102 (YYVRRSDWKFGDIPCRL). Cysteine 100 and cysteine 177 are joined by a disulfide. A helical transmembrane segment spans residues 103-123 (VLFMFAMNRQGSIIFLTVVAV). Residues 124-142 (DRYFRVVHPHHALNKISNW) lie on the Cytoplasmic side of the membrane. A helical membrane pass occupies residues 143–163 (TAAIISCLLWGITVGLTVHLL). The Extracellular segment spans residues 164–194 (KKKLLIQNGTANVCISFSICHTFRWHEAMFL). The helical transmembrane segment at 195–209 (LEFFLPLGIILFCSA) threads the bilayer. The Cytoplasmic portion of the chain corresponds to 210–236 (RIIWSLRQRQMDRHAKIKRAITFIMVV). A helical membrane pass occupies residues 237 to 256 (AIVFVICFLPSVVVRIHIFW). Topologically, residues 257-273 (LLHTSGTQNCEVYRSVD) are extracellular. The chain crosses the membrane as a helical span at residues 274–298 (LAFFITLSFTYMNSMLDPVVYYFSS). The Cytoplasmic segment spans residues 299–387 (PSFPNFFSTL…LEKQLGCCIE (89 aa)). Positions 319–343 (GEPDNNRSTSVELTGDPNKTRGAPE) are disordered.

Belongs to the G-protein coupled receptor 1 family. In terms of tissue distribution, expression largely restricted to adipose tissue and spleen.

The protein localises to the cell membrane. Receptor for 3-OH-octanoid acid mediates a negative feedback regulation of adipocyte lipolysis to counteract prolipolytic influences under conditions of physiological or pathological increases in beta-oxidation rates. Acts as a low affinity receptor for nicotinic acid. This pharmacological effect requires nicotinic acid doses that are much higher than those provided by a normal diet. In Homo sapiens (Human), this protein is Hydroxycarboxylic acid receptor 3 (HCAR3).